A 37-amino-acid chain; its full sequence is Large ribosomal subunit protein bL36 (37 aa).

The protein belongs to the bacterial ribosomal protein bL36 family.

The chain is Large ribosomal subunit protein bL36 from Sulfurimonas denitrificans (strain ATCC 33889 / DSM 1251) (Thiomicrospira denitrificans (strain ATCC 33889 / DSM 1251)).